A 260-amino-acid chain; its full sequence is 5-oxoprolinase subunit A 2 (260 aa).

Belongs to the LamB/PxpA family. Forms a complex composed of PxpA, PxpB and PxpC.

It carries out the reaction 5-oxo-L-proline + ATP + 2 H2O = L-glutamate + ADP + phosphate + H(+). Catalyzes the cleavage of 5-oxoproline to form L-glutamate coupled to the hydrolysis of ATP to ADP and inorganic phosphate. The protein is 5-oxoprolinase subunit A 2 of Ralstonia nicotianae (strain ATCC BAA-1114 / GMI1000) (Ralstonia solanacearum).